Here is a 418-residue protein sequence, read N- to C-terminus: Secreted beta-glucosidase SUN41 (418 aa).

The N-terminal stretch at 1–23 is a signal peptide; sequence MRFSQATVLAFAALSLAAPAFEA. The span at 81-97 shows a compositional bias: low complexity; that stretch reads SEETSSTSTSISSTTTI. Residues 81 to 150 are disordered; it reads SEETSSTSTS…SGSTNGIEGD (70 aa). Residue N100 is glycosylated (N-linked (GlcNAc...) asparagine). A compositionally biased stretch (polar residues) spans 112 to 126; the sequence is SLPSGTIKPSSFATE. Positions 127 to 136 are enriched in low complexity; the sequence is SQSQSQSSST.

It belongs to the SUN family. Predicted to be a substrate for cleavage by KEX2.

It localises to the secreted. The protein localises to the cell wall. Its function is as follows. Cell surface beta-glucosidase involved in cytokinesis, cell wall biogenesis, adhesion to host tissue, and biofilm formation; thus playing an important role in the host-pathogen interaction. Has hydrolytic activity on linear (1-&gt;3)-beta-D-glucans such as laminaribiose and other laminarioligosaccharides. The chain is Secreted beta-glucosidase SUN41 from Candida albicans (strain SC5314 / ATCC MYA-2876) (Yeast).